The following is a 585-amino-acid chain: uncharacterized protein (585 aa).

The interval 27-59 is disordered; it reads DDSERSVKSVSVSISDDEDSKTDVQDNMATPST.

This is an uncharacterized protein from Saccharomyces cerevisiae (strain ATCC 204508 / S288c) (Baker's yeast).